The primary structure comprises 513 residues: ATP synthase subunit alpha (513 aa).

169–176 (GDRQTGKT) contacts ATP.

The protein belongs to the ATPase alpha/beta chains family. F-type ATPases have 2 components, CF(1) - the catalytic core - and CF(0) - the membrane proton channel. CF(1) has five subunits: alpha(3), beta(3), gamma(1), delta(1), epsilon(1). CF(0) has three main subunits: a(1), b(2) and c(9-12). The alpha and beta chains form an alternating ring which encloses part of the gamma chain. CF(1) is attached to CF(0) by a central stalk formed by the gamma and epsilon chains, while a peripheral stalk is formed by the delta and b chains.

It is found in the cell inner membrane. It catalyses the reaction ATP + H2O + 4 H(+)(in) = ADP + phosphate + 5 H(+)(out). Produces ATP from ADP in the presence of a proton gradient across the membrane. The alpha chain is a regulatory subunit. This chain is ATP synthase subunit alpha, found in Nitrosomonas europaea (strain ATCC 19718 / CIP 103999 / KCTC 2705 / NBRC 14298).